The chain runs to 337 residues: DNA-directed RNA polymerase subunit alpha (337 aa).

The alpha N-terminal domain (alpha-NTD) stretch occupies residues 1–233 (MVREKVTVST…DLFIPFLHME (233 aa)). Residues 265–337 (KKIALKSIFI…FVIDLAKNKF (73 aa)) are alpha C-terminal domain (alpha-CTD).

The protein belongs to the RNA polymerase alpha chain family. As to quaternary structure, in plastids the minimal PEP RNA polymerase catalytic core is composed of four subunits: alpha, beta, beta', and beta''. When a (nuclear-encoded) sigma factor is associated with the core the holoenzyme is formed, which can initiate transcription.

It localises to the plastid. It is found in the chloroplast. The enzyme catalyses RNA(n) + a ribonucleoside 5'-triphosphate = RNA(n+1) + diphosphate. Functionally, DNA-dependent RNA polymerase catalyzes the transcription of DNA into RNA using the four ribonucleoside triphosphates as substrates. In Nicotiana sylvestris (Wood tobacco), this protein is DNA-directed RNA polymerase subunit alpha.